The sequence spans 1312 residues: Tetratricopeptide repeat protein 21B (1312 aa).

TPR repeat units lie at residues 4–38 (TDHY…YSND), 110–143 (PKAL…SNRS), 147–180 (LVLR…NKDI), 182–213 (ALIG…YPPF), 214–247 (LPAL…DGAN), and 325–358 (AEVA…DGNH). Positions 365 to 392 (VIQCQILQGQLEEAEQQLDFLHEIQESI) form a coiled coil. 16 TPR repeats span residues 493–526 (TEPL…DTAC), 528–560 (DFHL…NFKV), 564–597 (PLYH…QEMK), 615–648 (VSIY…FGGT), 720–753 (PHTS…NPQD), 755–787 (SLAN…SGQD), 789–820 (LCCD…EPVS), 829–861 (AKCL…QQRI), 881–914 (SEIC…SQDS), 916–947 (VKLQ…HSFK), 948–981 (EEAA…NPDN), 983–1015 (AVLS…SSRT), 1019–1052 (PGYN…SEWG), 1193–1226 (EKSW…NKSC), 1228–1260 (KAYE…SNQS), and 1262–1295 (PAVG…HPTY).

The protein belongs to the TTC21 family. Component of the IFT complex A (IFT-A).

Component of the IFT complex A (IFT-A), a complex required for retrograde ciliary transport and entry into cilia of G protein-coupled receptors (GPCRs). Negatively modulates the SHH signal transduction. In Xenopus laevis (African clawed frog), this protein is Tetratricopeptide repeat protein 21B (ttc21b).